The primary structure comprises 124 residues: Alkaline proteinase inhibitor (124 aa).

An N-terminal signal peptide occupies residues 1–17; the sequence is MPILVVLTLMSSGEIMA. An intrachain disulfide couples Cys-44 to Cys-67.

Belongs to the protease inhibitor I38 family.

It is found in the periplasm. Functionally, inhibitor of the alkaline protease. This chain is Alkaline proteinase inhibitor (inh), found in Yersinia ruckeri.